A 150-amino-acid polypeptide reads, in one-letter code: Large ribosomal subunit protein bL9 (150 aa).

This sequence belongs to the bacterial ribosomal protein bL9 family.

Its function is as follows. Binds to the 23S rRNA. The protein is Large ribosomal subunit protein bL9 of Paraburkholderia phymatum (strain DSM 17167 / CIP 108236 / LMG 21445 / STM815) (Burkholderia phymatum).